A 363-amino-acid chain; its full sequence is 3-isopropylmalate dehydrogenase (363 aa).

NAD(+) is bound at residue 78 to 91 (GPKWENLPPESQPE). 4 residues coordinate substrate: arginine 99, arginine 109, arginine 138, and aspartate 227. Residues aspartate 227, aspartate 251, and aspartate 255 each coordinate Mg(2+). 285 to 297 (GSAPDIAGKNIAN) contacts NAD(+).

This sequence belongs to the isocitrate and isopropylmalate dehydrogenases family. LeuB type 1 subfamily. As to quaternary structure, homodimer. It depends on Mg(2+) as a cofactor. The cofactor is Mn(2+).

Its subcellular location is the cytoplasm. It catalyses the reaction (2R,3S)-3-isopropylmalate + NAD(+) = 4-methyl-2-oxopentanoate + CO2 + NADH. It participates in amino-acid biosynthesis; L-leucine biosynthesis; L-leucine from 3-methyl-2-oxobutanoate: step 3/4. Catalyzes the oxidation of 3-carboxy-2-hydroxy-4-methylpentanoate (3-isopropylmalate) to 3-carboxy-4-methyl-2-oxopentanoate. The product decarboxylates to 4-methyl-2 oxopentanoate. The chain is 3-isopropylmalate dehydrogenase from Salmonella choleraesuis (strain SC-B67).